The primary structure comprises 286 residues: GTP cyclohydrolase MptA (286 aa).

This sequence belongs to the GTP cyclohydrolase IV family. Homodimer. Requires Fe(2+) as cofactor.

The catalysed reaction is GTP + H2O = 7,8-dihydroneopterin 2',3'-cyclic phosphate + formate + diphosphate + H(+). It functions in the pathway cofactor biosynthesis; 5,6,7,8-tetrahydromethanopterin biosynthesis. Its function is as follows. Converts GTP to 7,8-dihydro-D-neopterin 2',3'-cyclic phosphate, the first intermediate in the biosynthesis of coenzyme methanopterin. In Thermoplasma acidophilum (strain ATCC 25905 / DSM 1728 / JCM 9062 / NBRC 15155 / AMRC-C165), this protein is GTP cyclohydrolase MptA.